The following is a 197-amino-acid chain: MKYSRKKLKNKVYLAIIDLPHGVKGDVLVKVWSAEPQRLKTYGILYDDTGRPYEIVVLRVQKNNAIVHFKGVEDRSAAEALKGIRLYVTRDQLVDDLAEDEFYQVDLIGLRVQDCAGQSLGKVSGFFNFGAGDLLEIRLNTRKTTVLIPFSKAAVPEICVTSGFLVVEPVAAGLLNNKEKNKVENDLDSNEDERMKK.

Positions 99 to 174 (EDEFYQVDLI…LVVEPVAAGL (76 aa)) constitute a PRC barrel domain.

Belongs to the RimM family. In terms of assembly, binds ribosomal protein uS19.

It is found in the cytoplasm. Functionally, an accessory protein needed during the final step in the assembly of 30S ribosomal subunit, possibly for assembly of the head region. Essential for efficient processing of 16S rRNA. May be needed both before and after RbfA during the maturation of 16S rRNA. It has affinity for free ribosomal 30S subunits but not for 70S ribosomes. The protein is Ribosome maturation factor RimM of Bartonella quintana (strain Toulouse) (Rochalimaea quintana).